The following is a 70-amino-acid chain: Translational regulator CsrA (70 aa).

The protein belongs to the CsrA/RsmA family. Homodimer; the beta-strands of each monomer intercalate to form a hydrophobic core, while the alpha-helices form wings that extend away from the core.

Its subcellular location is the cytoplasm. Functionally, a translational regulator that binds mRNA to regulate translation initiation and/or mRNA stability. Usually binds in the 5'-UTR at or near the Shine-Dalgarno sequence preventing ribosome-binding, thus repressing translation. Its main target seems to be the major flagellin gene, while its function is anatagonized by FliW. The chain is Translational regulator CsrA from Clostridioides difficile (strain 630) (Peptoclostridium difficile).